The following is a 377-amino-acid chain: Rhodopsin, long-wavelength (377 aa).

Residues M1 to W51 are Extracellular-facing. N-linked (GlcNAc...) asparagine glycosylation is present at N22. Residues H52–I76 traverse the membrane as a helical segment. The Cytoplasmic segment spans residues F77 to N88. Residues L89–C113 traverse the membrane as a helical segment. At Y114–Y128 the chain is on the extracellular side. A disulfide bond links C125 and C202. A helical membrane pass occupies residues A129 to F148. Topologically, residues D149–G167 are cytoplasmic. The chain crosses the membrane as a helical span at residues A168–N191. At R192–S215 the chain is on the extracellular side. N198 carries an N-linked (GlcNAc...) asparagine glycan. Residues Y216–V243 form a helical membrane-spanning segment. Topologically, residues A244 to K278 are cytoplasmic. A helical membrane pass occupies residues V279–I302. Residues F303–S309 are Extracellular-facing. The helical transmembrane segment at P310–S334 threads the bilayer. An N6-(retinylidene)lysine modification is found at K321. Residues H335–A377 are Cytoplasmic-facing. The span at S357–T370 shows a compositional bias: low complexity. Residues S357 to A377 form a disordered region.

The protein belongs to the G-protein coupled receptor 1 family. Opsin subfamily. Phosphorylated on some or all of the serine and threonine residues present in the C-terminal region.

It localises to the membrane. In terms of biological role, visual pigments are the light-absorbing molecules that mediate vision. They consist of an apoprotein, opsin, covalently linked to 11-cis-retinal. The protein is Rhodopsin, long-wavelength of Apis mellifera (Honeybee).